A 56-amino-acid polypeptide reads, in one-letter code: Chymotrypsin inhibitor (56 aa).

Cystine bridges form between Cys-3–Cys-36, Cys-12–Cys-32, Cys-16–Cys-28, Cys-20–Cys-56, and Cys-38–Cys-50. The TIL domain maps to 3–56; the sequence is CGPNEVFNTCGSACAPTCAQPKTRICTMQCRIGCQCQEGFLRNGEGACVLPENC.

It belongs to the serine protease inhibitor-like (TIL domain-containing) family.

The protein resides in the secreted. Its function is as follows. Chymotrypsin and cathepsin G inhibitor. The sequence is that of Chymotrypsin inhibitor from Apis mellifera (Honeybee).